The chain runs to 118 residues: Beta-2-microglobulin (118 aa).

The N-terminal stretch at 1–20 (MAVSAALVLLGLLSLSGLDA) is a signal peptide. Positions 25-112 (PEVQVYSRHP…HVTLTQPKIV (88 aa)) constitute an Ig-like C1-type domain. A disulfide bridge connects residues C45 and C99.

This sequence belongs to the beta-2-microglobulin family. Heterodimer of an alpha chain and a beta chain. Beta-2-microglobulin is the beta-chain of major histocompatibility complex class I molecules.

The protein localises to the secreted. Component of the class I major histocompatibility complex (MHC). Involved in the presentation of peptide antigens to the immune system. The chain is Beta-2-microglobulin (B2M) from Ovis aries (Sheep).